We begin with the raw amino-acid sequence, 697 residues long: Polyribonucleotide nucleotidyltransferase (697 aa).

2 residues coordinate Mg(2+): Asp486 and Asp492. The KH domain maps to 553-612 (PRIHTIKIHPDKIKDVIGKCGSVIRALTEETKTIIDIEDDGTVTVAATDSIKAQQAICRI). The 69-residue stretch at 622 to 690 (GSIYHGKVTR…RQGRIRLSMK (69 aa)) folds into the S1 motif domain.

This sequence belongs to the polyribonucleotide nucleotidyltransferase family. In terms of assembly, component of the RNA degradosome, which is a multiprotein complex involved in RNA processing and mRNA degradation. It depends on Mg(2+) as a cofactor.

Its subcellular location is the cytoplasm. The catalysed reaction is RNA(n+1) + phosphate = RNA(n) + a ribonucleoside 5'-diphosphate. In terms of biological role, involved in mRNA degradation. Catalyzes the phosphorolysis of single-stranded polyribonucleotides processively in the 3'- to 5'-direction. This chain is Polyribonucleotide nucleotidyltransferase, found in Baumannia cicadellinicola subsp. Homalodisca coagulata.